The primary structure comprises 247 residues: 2,3-bisphosphoglycerate-dependent phosphoglycerate mutase (247 aa).

Substrate-binding positions include 8 to 15, 21 to 22, Arg-60, 87 to 90, Lys-98, 114 to 115, and 183 to 184; these read RHGESTWN, TG, ERHY, RR, and GN. The active-site Tele-phosphohistidine intermediate is the His-9. Glu-87 acts as the Proton donor/acceptor in catalysis.

It belongs to the phosphoglycerate mutase family. BPG-dependent PGAM subfamily. Homodimer.

It catalyses the reaction (2R)-2-phosphoglycerate = (2R)-3-phosphoglycerate. The protein operates within carbohydrate degradation; glycolysis; pyruvate from D-glyceraldehyde 3-phosphate: step 3/5. Catalyzes the interconversion of 2-phosphoglycerate and 3-phosphoglycerate. The polypeptide is 2,3-bisphosphoglycerate-dependent phosphoglycerate mutase (Acidovorax ebreus (strain TPSY) (Diaphorobacter sp. (strain TPSY))).